A 240-amino-acid polypeptide reads, in one-letter code: tRNA (guanine-N(1)-)-methyltransferase (240 aa).

S-adenosyl-L-methionine is bound by residues G110 and 129-134; that span reads LGDFVL.

It belongs to the RNA methyltransferase TrmD family. Homodimer.

It localises to the cytoplasm. It catalyses the reaction guanosine(37) in tRNA + S-adenosyl-L-methionine = N(1)-methylguanosine(37) in tRNA + S-adenosyl-L-homocysteine + H(+). Specifically methylates guanosine-37 in various tRNAs. The sequence is that of tRNA (guanine-N(1)-)-methyltransferase from Clostridium botulinum (strain 657 / Type Ba4).